Here is a 501-residue protein sequence, read N- to C-terminus: Zinc finger C3HC-type protein 1 (501 aa).

Alanine 2 is subject to N-acetylalanine. The interval 21–73 (VVRSPEGTPQKVRELIDEGIVPEEGGTEPKDTAATFQSVDGSPQAEQSPLEST) is disordered. At serine 24 the chain carries Phosphoserine. Phosphothreonine is present on threonine 28. Positions 54-72 (ATFQSVDGSPQAEQSPLES) are enriched in polar residues. Residues serine 58, serine 62, and serine 68 each carry the phosphoserine modification. Position 84 is a phosphothreonine (threonine 84). Residues 102 to 156 (CAKYGWVTVECDMLKCSSCQAFLCASLQPTFDFGRYKERCAELKKSLCSAHEKFC) form a C3HC-type zinc finger. A disordered region spans residues 302-421 (SPIPGVEGRP…TSPRSFFDPT (120 aa)). 2 positions are modified to phosphoserine: serine 320 and serine 328. Polar residues predominate over residues 326 to 338 (TRSQDATVSPGSE). Threonine 332 carries the phosphothreonine modification. Phosphoserine occurs at positions 334, 337, 343, 353, 358, 369, and 380. 2 stretches are compositionally biased toward polar residues: residues 350-359 (RTRSWESSSP) and 369-383 (SPTTRSRPVTRSMGT). Threonine 383 bears the Phosphothreonine mark. Serine 394 carries the post-translational modification Phosphoserine. Positions 395–401 (PLRRTKR) match the Nuclear localization signal motif. 2 positions are modified to phosphoserine: serine 406 and serine 482. The span at 406-420 (SSSSSDTSPRSFFDP) shows a compositional bias: low complexity.

In terms of assembly, interacts with TPR; this interaction mediates ZC3HC1 nuclear envelopes (NE)-association but also required for proper positioning of a substantial amount of TPR at the nuclear basket (NB). Post-translationally, phosphorylated. May also be weakly phosphorylated on Tyr residues.

The protein resides in the nucleus. It is found in the nucleus envelope. Its function is as follows. Required for proper positioning of a substantial amount of TPR at the nuclear basket (NB) through interaction with TPR. In Mus musculus (Mouse), this protein is Zinc finger C3HC-type protein 1 (Zc3hc1).